The chain runs to 239 residues: Fatty acid metabolism regulator protein (239 aa).

One can recognise an HTH gntR-type domain in the interval 6–74 (QSPAGFAEEY…HGKPTKVNNF (69 aa)). A DNA-binding region (H-T-H motif) is located at residues 34–53 (ERELSELIGVTRTTLREVLQ).

In terms of assembly, homodimer.

It localises to the cytoplasm. In terms of biological role, multifunctional regulator of fatty acid metabolism. This chain is Fatty acid metabolism regulator protein, found in Serratia proteamaculans (strain 568).